A 605-amino-acid chain; its full sequence is Arginine--tRNA ligase (605 aa).

The 'HIGH' region motif lies at 131 to 141 (ANPTGPMHVGH). The interval 290–309 (PPPKSKKGQPAPAQAASNSA) is disordered. Positions 298–309 (QPAPAQAASNSA) are enriched in low complexity.

This sequence belongs to the class-I aminoacyl-tRNA synthetase family. As to quaternary structure, monomer.

Its subcellular location is the cytoplasm. The enzyme catalyses tRNA(Arg) + L-arginine + ATP = L-arginyl-tRNA(Arg) + AMP + diphosphate. In Anaeromyxobacter sp. (strain Fw109-5), this protein is Arginine--tRNA ligase.